The sequence spans 362 residues: UDP-N-acetylglucosamine--N-acetylmuramyl-(pentapeptide) pyrophosphoryl-undecaprenol N-acetylglucosamine transferase (362 aa).

The UDP-N-acetyl-alpha-D-glucosamine site is built by arginine 166, serine 196, and glutamine 290.

It belongs to the glycosyltransferase 28 family. MurG subfamily.

It is found in the cell membrane. The catalysed reaction is Mur2Ac(oyl-L-Ala-gamma-D-Glu-L-Lys-D-Ala-D-Ala)-di-trans,octa-cis-undecaprenyl diphosphate + UDP-N-acetyl-alpha-D-glucosamine = beta-D-GlcNAc-(1-&gt;4)-Mur2Ac(oyl-L-Ala-gamma-D-Glu-L-Lys-D-Ala-D-Ala)-di-trans,octa-cis-undecaprenyl diphosphate + UDP + H(+). Its pathway is cell wall biogenesis; peptidoglycan biosynthesis. Its function is as follows. Cell wall formation. Catalyzes the transfer of a GlcNAc subunit on undecaprenyl-pyrophosphoryl-MurNAc-pentapeptide (lipid intermediate I) to form undecaprenyl-pyrophosphoryl-MurNAc-(pentapeptide)GlcNAc (lipid intermediate II). This is UDP-N-acetylglucosamine--N-acetylmuramyl-(pentapeptide) pyrophosphoryl-undecaprenol N-acetylglucosamine transferase from Staphylococcus carnosus (strain TM300).